Reading from the N-terminus, the 407-residue chain is D-galactonate dehydratase family member Pjdr2_1176 (407 aa).

A Mg(2+)-binding site is contributed by D208. H210 is a D-arabinonate binding site. Positions 234 and 260 each coordinate Mg(2+). Residues E260, R281, and E337 each coordinate D-arabinonate.

Belongs to the mandelate racemase/muconate lactonizing enzyme family. GalD subfamily.

Functionally, has no detectable activity with D-mannonate and with a panel of 70 other acid sugars (in vitro), in spite of the conservation of the residues that are expected to be important for catalytic activity and cofactor binding. May have evolved a divergent function. The polypeptide is D-galactonate dehydratase family member Pjdr2_1176 (Paenibacillus sp. (strain JDR-2)).